Here is a 218-residue protein sequence, read N- to C-terminus: MATLGTGMRCLKSCVFILNIICLLCSLVLIGAGAYVEVKFSQYEANLHKVWQAAPIAIIVVGVVILIVSFLGCCGAIKENVCMLYMYAFFLIVLLIAELVAAIVAVVYKDKIDDEINTLMTGALENPNEEITATMDKIQTSFHCCGVKGPDDYKGNVPASCKEGQEVYVQGCLSVFSAFLKRNLIIVACVAFGVCFFQLLSIVIACCLGQRIHDYQNV.

Topologically, residues 1-12 are cytoplasmic; sequence MATLGTGMRCLK. A helical transmembrane segment spans residues 13–36; the sequence is SCVFILNIICLLCSLVLIGAGAYV. Over 37-55 the chain is Extracellular; that stretch reads EVKFSQYEANLHKVWQAAP. A helical membrane pass occupies residues 56–71; the sequence is IAIIVVGVVILIVSFL. The Cytoplasmic segment spans residues 72–82; the sequence is GCCGAIKENVC. The helical transmembrane segment at 83-108 threads the bilayer; it reads MLYMYAFFLIVLLIAELVAAIVAVVY. The Extracellular portion of the chain corresponds to 109–183; that stretch reads KDKIDDEINT…SVFSAFLKRN (75 aa). The helical transmembrane segment at 184-205 threads the bilayer; that stretch reads LIIVACVAFGVCFFQLLSIVIA. The Cytoplasmic portion of the chain corresponds to 206–218; that stretch reads CCLGQRIHDYQNV.

Belongs to the tetraspanin (TM4SF) family.

The protein localises to the membrane. This is 23 kDa integral membrane protein from Schistosoma japonicum (Blood fluke).